The sequence spans 89 residues: uncharacterized protein (89 aa).

A helical transmembrane segment spans residues 28-50 (LYLDLGFSALLFYNSNLLFSFIL).

It localises to the membrane. This is an uncharacterized protein from Archaeoglobus fulgidus (strain ATCC 49558 / DSM 4304 / JCM 9628 / NBRC 100126 / VC-16).